Here is a 314-residue protein sequence, read N- to C-terminus: DNA oxidative demethylase ALKBH2 (314 aa).

The segment covering 1–28 (MTNPLNSTAANRSNQPSSDGISDGQITN) has biased composition (polar residues). The disordered stretch occupies residues 1-75 (MTNPLNSTAA…KRFHYHQDQR (75 aa)). Residues 57–75 (NGKDDSDTKKRFHYHQDQR) show a composition bias toward basic and acidic residues. Substrate contacts are provided by residues W132 and 160-163 (ALVY). Positions 194 to 314 (RFNSLLLNRY…RINLTFRLVL (121 aa)) constitute a Fe2OG dioxygenase domain. Residue 201–203 (NRY) participates in 2-oxoglutarate binding. Fe cation contacts are provided by H213 and D215. D216 is a binding site for substrate. Residues 242–271 (KKDEESSQGKTGDSGPAKKRLKRSSREDQQ) form a disordered region. H293 contributes to the Fe cation binding site. Residues R305 and 305-311 (RINLTFR) each bind 2-oxoglutarate.

This sequence belongs to the alkB family. Requires Fe(2+) as cofactor. Expressed ubiquitously, including in seedlings, leaves and flowers.

It is found in the nucleus. The enzyme catalyses a methylated nucleobase within DNA + 2-oxoglutarate + O2 = a nucleobase within DNA + formaldehyde + succinate + CO2. Dioxygenase that repairs alkylated DNA containing 1-methyladenine and 1-ethenoadenine by oxidative demethylation. Accepts double-stranded and single-stranded substrates, with a preference for dsDNA over ssDNA. Confers resistance to methylating agents such as methylmethanesulphonate (MMS). The protein is DNA oxidative demethylase ALKBH2 (ALKBH2) of Arabidopsis thaliana (Mouse-ear cress).